Here is a 510-residue protein sequence, read N- to C-terminus: Tryptophan 6-hydroxylase fscE (510 aa).

The chain crosses the membrane as a helical span at residues 11–31; that stretch reads LLPIEGVIILVFVLSCFSLAI. Cysteine 452 provides a ligand contact to heme.

It belongs to the cytochrome P450 family. The cofactor is heme.

It is found in the membrane. It functions in the pathway secondary metabolite biosynthesis. Its function is as follows. Tryptophan 6-hydroxylase; part of the fragmented gene cluster that mediates the biosynthesis of fusarochromene, a tryptophan-derived metabolite closely related to a group of mycotoxins including fusarochromanone. Within the pathway, fscE hydroxalates the first intermediate D-tryptophan to yield 6-hydroxytryptophan. The first step of the pathway is the epimerization of L-tryptophan to D-tryptophan in the presence of the NRPS-like tryptophan epimerase fscC. D-tryptophan is subsequently hydroxylated by the tryptophan 6-hydroxylase fscE to yield 6-hydroxytryptophan. The pyrrole ring undergoes cleavaged by the tryptophan 2,3-dioxygenase fscD and is finally converted to 4-hydroxykyrunenine by the hydrolase fscH. The NRPS-like oxidoreductase fscA reduces the carboxyl group to primary alcohol and the DMATS-type prenyltransferase fscG performs prenylation, followed by the formation of a chromene ring catalyzed by the oxidoreductase fscI, which leads to desacetylfusarochromene. Epoxidation by fscF and rearrangement reactions of chromene double bonds convert compound desacetylfusarochromene to fusarochromanones. Although specific acetyltransferases were not found near the fsc gene cluster, several predicted enzymes containing the N-acetyltransferase superfamily domain are present in the genome of F.equiseti. These predicted enzymes may have the potential to convert desacetylfusarochromene to fusarochromene. The polypeptide is Tryptophan 6-hydroxylase fscE (Fusarium equiseti (Fusarium scirpi)).